Consider the following 61-residue polypeptide: Potassium channel toxin alpha-KTx 5.3 (61 aa).

The signal sequence occupies residues 1–28 (MHNYYKIVLIMVAFFAVIITFSNIQVEG). 3 disulfides stabilise this stretch: C31/C49, C36/C54, and C40/C56. The interval 34–37 (KRCQ) is [R/K]XCQ motif. The residue at position 59 (H59) is a Histidine amide.

It belongs to the short scorpion toxin superfamily. Potassium channel inhibitor family. Alpha-KTx 05 subfamily. In terms of tissue distribution, expressed by the venom gland.

It is found in the secreted. Functionally, blocks small conductance calcium-activated potassium channels (KCNN, SK). Has also been shown to weakly inhibit Kv11.1/KCNH2/ERG1, Kv1.2/KCNA2, Kv1.3/KCNA3 and Kv2.1/KCNB1 voltage-gated potassium channels. The protein is Potassium channel toxin alpha-KTx 5.3 of Olivierus martensii (Manchurian scorpion).